A 289-amino-acid chain; its full sequence is Thioredoxin-like protein 1 (289 aa).

The Thioredoxin domain maps to 2 to 109 (VGVKPVGSDP…EEKIKQHLEN (108 aa)). A disulfide bridge connects residues Cys-34 and Cys-37. Ser-113 carries the phosphoserine modification. The 171-residue stretch at 115 to 285 (EDADIPKGYM…NDFKRVVGKK (171 aa)) folds into the PITH domain.

Component of the 19S regulatory cap of the 26S proteasome. Interacts with PSMD14/RPN11. Interacts with, and reduces EEF1A1.

Its subcellular location is the cytoplasm. It is found in the nucleus. Its function is as follows. Active thioredoxin with a redox potential of about -250 mV. The protein is Thioredoxin-like protein 1 (Txnl1) of Mus musculus (Mouse).